We begin with the raw amino-acid sequence, 196 residues long: SAGA-associated factor 11 homolog (196 aa).

The SGF11-type zinc finger occupies cysteine 102–cysteine 123. Residues threonine 140–phenylalanine 196 are disordered. Over residues glutamate 142–valine 153 the composition is skewed to polar residues. At serine 172 the chain carries Phosphoserine. Residues asparagine 182–phenylalanine 196 show a composition bias toward low complexity.

The protein belongs to the SGF11 family. In terms of assembly, component of some SAGA transcription coactivator-HAT complexes, at least composed of Ada2b, not/nonstop, Pcaf/Gcn5, Sgf11 and Spt3. Within the SAGA complex, Sgf11, e(y)2, and not/nonstop form an additional subcomplex of SAGA called the DUB module (deubiquitination module). Interacts directly with not/nonstop. Interacts with the AMEX complex component xmas-2. Interacts with Cbp80; important for promoter recruitment of Sgf11 that is not associated with the DUB module.

It localises to the nucleus. The protein localises to the nucleoplasm. The protein resides in the cytoplasm. Component of the transcription regulatory histone acetylation (HAT) complex SAGA, a multiprotein complex that activates transcription by remodeling chromatin and mediating histone acetylation and deubiquitination. Within the SAGA complex, participates in a subcomplex that specifically deubiquitinates histone H2B. The SAGA complex is recruited to specific gene promoters by activators, where it is required for transcription. Required for nuclear receptor-mediated transactivation. Binds independently on SAGA to promoters in an RNA-dependent manner. Binds to mRNA and is essential for total mRNA export from the nucleus. Required to counteract heterochromatin silencing. Controls the development of neuronal connectivity in visual system by being required for accurate axon targeting in the optic lobe. Required for expression of ecdysone-induced genes such as br/broad. The protein is SAGA-associated factor 11 homolog of Drosophila persimilis (Fruit fly).